A 182-amino-acid chain; its full sequence is Ribosome-recycling factor (182 aa).

Belongs to the RRF family.

The protein resides in the cytoplasm. In terms of biological role, responsible for the release of ribosomes from messenger RNA at the termination of protein biosynthesis. May increase the efficiency of translation by recycling ribosomes from one round of translation to another. The polypeptide is Ribosome-recycling factor (Gloeothece citriformis (strain PCC 7424) (Cyanothece sp. (strain PCC 7424))).